Consider the following 849-residue polypeptide: A-kinase anchor protein 4 (849 aa).

The propeptide occupies 1 to 188 (MIAYCGTTTM…MAASKNTNNN (188 aa)). Residues S96, S130, S190, and S204 each carry the phosphoserine modification. Polar residues predominate over residues 183–205 (KNTNNNQSPSNPATKSPSNQRSV). The interval 183–210 (KNTNNNQSPSNPATKSPSNQRSVATPEG) is disordered. T207 carries the post-translational modification Phosphothreonine. 3 positions are modified to phosphoserine: S213, S226, and S271. The interval 219 to 232 (FYVNRLSSLVIQMA) is PKA-RI and PKA-RII subunit binding domain. Position 301 is a phosphotyrosine (Y301). Phosphoserine occurs at positions 302, 341, 431, 442, 444, 463, 492, 497, and 504. Positions 335–344 (YANQVASDMM) are PKA-RI-alpha subunit binding domain. T506 carries the post-translational modification Phosphothreonine. The residue at position 538 (S538) is a Phosphoserine. A Phosphoserine; by STK33 modification is found at S583. Residues S628, S633, S652, and S702 each carry the phosphoserine modification.

It belongs to the AKAP110 family. As to quaternary structure, interacts with PRKAR1A and PRKAR2A. Interacts with ENO4. Interacts with QRICH2. Phosphorylated by STK33 during sperm flagella assembly. In terms of tissue distribution, expressed in the fibrous sheath of spermatozoa (at protein level). Expressed in step 1 to step 6 spermatids, abundance then increases during steps 8 to 12, abundance decreases thereafter.

Its subcellular location is the cell projection. It is found in the cilium. The protein localises to the flagellum. Functionally, major structural component of sperm fibrous sheath. Plays a role in sperm motility. In Mus musculus (Mouse), this protein is A-kinase anchor protein 4.